A 355-amino-acid polypeptide reads, in one-letter code: Agamous-like MADS-box protein AGL81 (355 aa).

The disordered stretch occupies residues 1–22; that stretch reads MAIRSLPSSSRCSSSSSSSSYS. Positions 26-68 constitute an MADS-box domain; it reads TSLSNRLETIFKKASELCTLCDIEACVIYYGPDGELKTWPPER. The segment covering 162-174 has biased composition (basic and acidic residues); it reads VESQKHKETKPDH. Residues 162-186 are disordered; that stretch reads VESQKHKETKPDHQSLASSSLNHQT. Positions 176–186 are enriched in polar residues; the sequence is SLASSSLNHQT.

As to quaternary structure, interacts with MEE14/CBP1.

Its subcellular location is the nucleus. Its function is as follows. Probable transcription factor that may function in the maintenance of the proper function of the central cell in pollen tube attraction. The protein is Agamous-like MADS-box protein AGL81 of Arabidopsis thaliana (Mouse-ear cress).